Consider the following 428-residue polypeptide: Maltoporin (428 aa).

Residues 1-21 form the signal peptide; it reads MKKTLLAVAIGGAMFATSAAA.

The protein belongs to the porin LamB (TC 1.B.3) family. As to quaternary structure, homotrimer formed of three 18-stranded antiparallel beta-barrels, containing three independent channels.

It localises to the cell outer membrane. It catalyses the reaction beta-maltose(in) = beta-maltose(out). Functionally, involved in the transport of maltose and maltodextrins. The polypeptide is Maltoporin (Mannheimia succiniciproducens (strain KCTC 0769BP / MBEL55E)).